The following is a 184-amino-acid chain: Peptidyl-tRNA hydrolase (184 aa).

Y14 is a binding site for tRNA. The active-site Proton acceptor is the H19. The tRNA site is built by F60 and N62.

The protein belongs to the PTH family. As to quaternary structure, monomer.

It is found in the cytoplasm. It catalyses the reaction an N-acyl-L-alpha-aminoacyl-tRNA + H2O = an N-acyl-L-amino acid + a tRNA + H(+). Hydrolyzes ribosome-free peptidyl-tRNAs (with 1 or more amino acids incorporated), which drop off the ribosome during protein synthesis, or as a result of ribosome stalling. Its function is as follows. Catalyzes the release of premature peptidyl moieties from peptidyl-tRNA molecules trapped in stalled 50S ribosomal subunits, and thus maintains levels of free tRNAs and 50S ribosomes. The polypeptide is Peptidyl-tRNA hydrolase (Mesomycoplasma hyopneumoniae (strain 7448) (Mycoplasma hyopneumoniae)).